The sequence spans 813 residues: MKNNQFAIVPTDSETAIAELTKIHFITPDMDALTTVPAVYQALLAKSLPEVHTASGLTHKFNNIMATSQHTLSEWLADATIVNNQVFYNVGLQLLGFLPGQDFELADPLLAMRDIHLPMVGDSAFDREALYYAWYLLLNTRGNNGQTLIESLTTRGYFVPFYQLPNDQKPLFFNGKAQAVFDTNALIRDVVYVEAPLDTDHDGQRDLLKVEILRPAETETGLKVPVLYTASPYNQGINDQAGDAQMHNVDVPLTAKEPDENTYADVEFQPTTAQLPAARTATTTTDTAEETFSREKSYTLNDYFLARGFAVVYAAGIGSIDSDGLAPTGDVDETTSTVAIIEWLTGKRQAFTNRDGNIAIKAWWCNGAVAMTGRSYLGTLATAAATTGVAGLKTIISEAAISSWYDYYRDNGLVVAPDTFQGEDTDVLAAEVFSRSLKAGDAHQIQPAFDQKLAELTADQDRASGNYNRFWDERNYLKNVDKIKADIIMVHGLNDWNVKPRNVANLWDKLQAVPVTKKLILHQGQHIYINNLQSLDFTDMMNLWLSHKLYGLDNHAETLLPNVLVQDNTQAQTWHGYDNWWQDTTDALDFKVQYKELVPADHTVDQRAAHFTDKLPDKLFDHYKHHLDSWQRDLLQEDKLNPLYDHRLLFKSWQAPEDQLLVGIPHVAGSVAVNKNFGMLSFMLIDFGAARRLTVSPQILAAKALDLGYHWREDDLKDFKLAGETPFKMITKGHLNLQNRHHPWHAEAIQPNVFYDFSVDLQPLFHHLLKGHQLGLVIYATDMKMTIRGNQDLQYSLNLNDIRLHVPMKKITD.

Active-site charge relay system residues include Ser-375, Asp-495, and His-526.

The protein belongs to the peptidase S15 family. As to quaternary structure, homodimer.

It is found in the cytoplasm. The catalysed reaction is Hydrolyzes Xaa-Pro-|- bonds to release unblocked, N-terminal dipeptides from substrates including Ala-Pro-|-p-nitroanilide and (sequentially) Tyr-Pro-|-Phe-Pro-|-Gly-Pro-|-Ile.. Removes N-terminal dipeptides sequentially from polypeptides having unsubstituted N-termini provided that the penultimate residue is proline. The chain is Xaa-Pro dipeptidyl-peptidase from Lactiplantibacillus plantarum (strain ATCC BAA-793 / NCIMB 8826 / WCFS1) (Lactobacillus plantarum).